Reading from the N-terminus, the 415-residue chain is Actin-like protein 9 (415 aa).

The disordered stretch occupies residues 1-22 (MDVNGHPKFQPSPETDGPLPLT).

The protein belongs to the actin family. In terms of assembly, interacts with ACTL7A.

The protein localises to the cytoplasmic vesicle. It localises to the secretory vesicle. The protein resides in the acrosome. It is found in the cytoplasm. Its subcellular location is the cytoskeleton. The protein localises to the perinuclear theca. In terms of biological role, testis-specic protein that plays an important role in fusion of proacrosomal vesicles and perinuclear theca formation. The chain is Actin-like protein 9 (Actl9) from Mus musculus (Mouse).